We begin with the raw amino-acid sequence, 189 residues long: MTKSNETERMEESEETHSSDIRSASESDHASGSDHTESADEIPTADAEQGELEQLEKLKDDLARERAAFHNFRMARAKQAEIERDRTRSEVIRVILPVLDDFARIEKHSTLDDPFKAVITKLRSAMEKIGLTAFGNPGDPFNPELHEALFQNPSPDVQTETVQDVIEAGYCLGETVIRAAKVVVQVPNG.

Over residues 1–38 (MTKSNETERMEESEETHSSDIRSASESDHASGSDHTES) the composition is skewed to basic and acidic residues. Residues 1–54 (MTKSNETERMEESEETHSSDIRSASESDHASGSDHTESADEIPTADAEQGELEQ) are disordered.

The protein belongs to the GrpE family. In terms of assembly, homodimer.

It is found in the cytoplasm. Functionally, participates actively in the response to hyperosmotic and heat shock by preventing the aggregation of stress-denatured proteins, in association with DnaK and GrpE. It is the nucleotide exchange factor for DnaK and may function as a thermosensor. Unfolded proteins bind initially to DnaJ; upon interaction with the DnaJ-bound protein, DnaK hydrolyzes its bound ATP, resulting in the formation of a stable complex. GrpE releases ADP from DnaK; ATP binding to DnaK triggers the release of the substrate protein, thus completing the reaction cycle. Several rounds of ATP-dependent interactions between DnaJ, DnaK and GrpE are required for fully efficient folding. This is Protein GrpE from Tropheryma whipplei (strain TW08/27) (Whipple's bacillus).